Reading from the N-terminus, the 328-residue chain is MKDLLQQLTSHYRLTKEEAKEAMLAIGNGKINAAQVAAFISVYMMRSITVAELQGFREALLEMCLDADLSEYDPIDIVGTGGDGKDTFNISTLSCFVVAGAGIKVAKHGNYAVSSSCGSSNVVEYLGYKFSNSKDVLRKQIEEANFCMLHAPLFHPALKNVAPVRKELGMRTIYNMLGPLVNPALPTYHLLGTFNMDLARLYGYIHQSLNSKFAIVHALDGYDEISLTGGFKVISNQLDRVLEPDDMGLHTYKAAELSGGKTVEDAAKIFIEVLENKSTRAQKEVVLANAGLAISIAKPDISLFDAIATARESLESGQAYECFKKAVK.

Residues Gly79, 82 to 83 (GD), Thr87, 89 to 92 (NIST), 107 to 115 (KHGNYAVSS), and Ser119 each bind 5-phospho-alpha-D-ribose 1-diphosphate. Residue Gly79 coordinates anthranilate. Residue Ser91 coordinates Mg(2+). Asn110 contacts anthranilate. Arg165 lines the anthranilate pocket. Mg(2+)-binding residues include Asp223 and Glu224.

This sequence belongs to the anthranilate phosphoribosyltransferase family. As to quaternary structure, homodimer. Mg(2+) serves as cofactor.

The catalysed reaction is N-(5-phospho-beta-D-ribosyl)anthranilate + diphosphate = 5-phospho-alpha-D-ribose 1-diphosphate + anthranilate. It functions in the pathway amino-acid biosynthesis; L-tryptophan biosynthesis; L-tryptophan from chorismate: step 2/5. Functionally, catalyzes the transfer of the phosphoribosyl group of 5-phosphorylribose-1-pyrophosphate (PRPP) to anthranilate to yield N-(5'-phosphoribosyl)-anthranilate (PRA). The sequence is that of Anthranilate phosphoribosyltransferase from Cytophaga hutchinsonii (strain ATCC 33406 / DSM 1761 / CIP 103989 / NBRC 15051 / NCIMB 9469 / D465).